The following is a 107-amino-acid chain: EPIDERMAL PATTERNING FACTOR-like protein 3 (107 aa).

The signal sequence occupies residues Met-1–Ala-24. Disulfide bonds link Cys-64-Cys-102, Cys-68-Cys-74, and Cys-71-Cys-104.

The protein belongs to the plant cysteine rich small secretory peptide family. Epidermal patterning factor subfamily.

It localises to the secreted. In terms of biological role, controls stomatal patterning. This chain is EPIDERMAL PATTERNING FACTOR-like protein 3, found in Arabidopsis thaliana (Mouse-ear cress).